Consider the following 219-residue polypeptide: Germin-like protein subfamily 2 member 2 (219 aa).

A signal peptide spans 1 to 22; it reads MMNSRISIIIALSCIMITSIRA. An intrachain disulfide couples C32 to C47. N-linked (GlcNAc...) asparagine glycans are attached at residues N52 and N70. The region spanning 59–209 is the Cupin type-1 domain; sequence FFAGISKPAV…TFQVGSKMVD (151 aa). 4 residues coordinate Mn(2+): H109, H111, E116, and H155.

It belongs to the germin family. Oligomer (believed to be a pentamer but probably hexamer).

It is found in the secreted. The protein localises to the extracellular space. It localises to the apoplast. Its function is as follows. May play a role in plant defense. Probably has no oxalate oxidase activity even if the active site is conserved. This chain is Germin-like protein subfamily 2 member 2, found in Arabidopsis thaliana (Mouse-ear cress).